The sequence spans 79 residues: UPF0154 protein SUB0399 (79 aa).

A helical membrane pass occupies residues 4 to 24 (AIWILLIVLALIGGLFGGVFI).

The protein belongs to the UPF0154 family.

It is found in the cell membrane. This is UPF0154 protein SUB0399 from Streptococcus uberis (strain ATCC BAA-854 / 0140J).